The following is a 391-amino-acid chain: Matrix metalloproteinase-23 (391 aa).

Residues 1 to 19 (MGWRACLRPEASGAVQGRW) lie on the Cytoplasmic side of the membrane. The propeptide occupies 1 to 79 (MGWRACLRPE…LSMLVTRRRR (79 aa)). The helical; Signal-anchor for type II membrane protein transmembrane segment at 20 to 38 (LGAVLSGLCLLSALAFLEW) threads the bilayer. Residues 39–391 (LGSPTETAWN…TYSWRVRVRS (353 aa)) lie on the Lumenal side of the membrane. N93 and N149 each carry an N-linked (GlcNAc...) asparagine glycan. H212 lines the Zn(2+) pocket. E213 is a catalytic residue. Residues H216 and H222 each coordinate Zn(2+). N233 carries an N-linked (GlcNAc...) asparagine glycan. Positions 256–290 (CLDRIFVCTSWARKGFCDVRQRLMKRLCPRSCDFC) constitute a ShKT domain. 3 cysteine pairs are disulfide-bonded: C256–C290, C263–C283, and C272–C287. An Ig-like C2-type domain is found at 296 to 381 (PTVATTTSPT…VVRHRQRVLT (86 aa)). N317 carries an N-linked (GlcNAc...) asparagine glycan. Cysteines 322 and 371 form a disulfide.

The protein belongs to the peptidase M10A family. The cofactor is Zn(2+). N-glycosylated. In terms of processing, proteolytic cleavage might yield an active form. In terms of tissue distribution, expressed at the highest levels in ovary and uterus. In ovary expression is strictly confined to granulosa cells of preantral and small antral follicles. Detected also in testis and prostate.

It localises to the membrane. It is found in the endoplasmic reticulum membrane. With respect to regulation, inhibited by TIMP2. Protease. May regulate the surface expression of some potassium channels by retaining them in the endoplasmic reticulum. This is Matrix metalloproteinase-23 (Mmp23) from Rattus norvegicus (Rat).